Here is a 224-residue protein sequence, read N- to C-terminus: Ribose-5-phosphate isomerase A (224 aa).

Substrate-binding positions include 26–29, 82–85, and 95–98; these read TGST, DGAD, and KGGG. Residue Glu104 is the Proton acceptor of the active site. Lys122 is a binding site for substrate.

It belongs to the ribose 5-phosphate isomerase family. Homodimer.

The enzyme catalyses aldehydo-D-ribose 5-phosphate = D-ribulose 5-phosphate. It functions in the pathway carbohydrate degradation; pentose phosphate pathway; D-ribose 5-phosphate from D-ribulose 5-phosphate (non-oxidative stage): step 1/1. Catalyzes the reversible conversion of ribose-5-phosphate to ribulose 5-phosphate. In Streptococcus suis (strain 98HAH33), this protein is Ribose-5-phosphate isomerase A.